The following is an 811-amino-acid chain: G-type lectin S-receptor-like serine/threonine-protein kinase LECRK2 (811 aa).

An N-terminal signal peptide occupies residues 1–23 (MAPLLFLPILQLLLLYCTKSAQA). A Bulb-type lectin domain is found at 24-153 (QLNISIGSSL…DGATKWESFG (130 aa)). The Extracellular segment spans residues 24–464 (QLNISIGSSL…DKKYWILGSS (441 aa)). N-linked (GlcNAc...) asparagine glycans are attached at residues N26, N39, N59, N219, N226, N237, and N242. The region spanning 292-344 (PENICQTIQTKVGSGACGFNSYCTFDGTKNTTNCLCPQRYKFFDNERTYKGCR) is the EGF-like; atypical domain. Disulfide bonds link C296-C314, C308-C325, C327-C343, C389-C411, and C393-C399. N321 carries an N-linked (GlcNAc...) asparagine glycan. The 85-residue stretch at 352-436 (CDLDETAAMV…LQATVLLKVP (85 aa)) folds into the PAN domain. Residues 465-485 (LFFGSSVLVNFLLIFVLLFGT) traverse the membrane as a helical segment. Over 486-811 (YCSITSRKKT…DPSSYISSLA (326 aa)) the chain is Cytoplasmic. The Protein kinase domain maps to 521-795 (GGFHEVLGTG…KVMQMLDGAV (275 aa)). ATP is bound by residues 527-535 (LGTGASGIV) and K551. D645 (proton acceptor) is an active-site residue.

The protein belongs to the protein kinase superfamily. Ser/Thr protein kinase family.

It localises to the membrane. The catalysed reaction is L-seryl-[protein] + ATP = O-phospho-L-seryl-[protein] + ADP + H(+). It carries out the reaction L-threonyl-[protein] + ATP = O-phospho-L-threonyl-[protein] + ADP + H(+). Involved in resistance against the herbivorous insect brown planthopper (N.lugens, BPH). Member of the BPH3 (BPH resistance locus 3) cluster which contains LECRK1, LECRK2 and LECRK3. The chain is G-type lectin S-receptor-like serine/threonine-protein kinase LECRK2 from Oryza sativa subsp. japonica (Rice).